A 92-amino-acid chain; its full sequence is Putative lambdoid prophage defective integrase (92 aa).

It belongs to the 'phage' integrase family.

The sequence is that of Putative lambdoid prophage defective integrase (intG) from Escherichia coli O157:H7.